Here is a 349-residue protein sequence, read N- to C-terminus: S-adenosylmethionine:tRNA ribosyltransferase-isomerase (349 aa).

This sequence belongs to the QueA family. In terms of assembly, monomer.

It localises to the cytoplasm. The enzyme catalyses 7-aminomethyl-7-carbaguanosine(34) in tRNA + S-adenosyl-L-methionine = epoxyqueuosine(34) in tRNA + adenine + L-methionine + 2 H(+). The protein operates within tRNA modification; tRNA-queuosine biosynthesis. Functionally, transfers and isomerizes the ribose moiety from AdoMet to the 7-aminomethyl group of 7-deazaguanine (preQ1-tRNA) to give epoxyqueuosine (oQ-tRNA). This Pseudomonas putida (strain ATCC 700007 / DSM 6899 / JCM 31910 / BCRC 17059 / LMG 24140 / F1) protein is S-adenosylmethionine:tRNA ribosyltransferase-isomerase.